A 392-amino-acid polypeptide reads, in one-letter code: Lysine acetyltransferase (392 aa).

It carries out the reaction L-lysine + acetyl-CoA = N(6)-acetyl-L-lysine + CoA + H(+). It participates in amino-acid degradation; L-lysine degradation via acetylation pathway; glutarate from L-lysine: step 1/6. With respect to regulation, activity is inhibited by 5-aminovalerate. In terms of biological role, lysine N-6-acetyl transferase (LAT) that catalyzes the first step of the lysine degradation pathway. This is Lysine acetyltransferase from Yarrowia lipolytica (strain CLIB 122 / E 150) (Yeast).